Consider the following 263-residue polypeptide: Type III pantothenate kinase (263 aa).

Residue Asp9–Lys16 participates in ATP binding. Substrate-binding positions include Tyr103 and Gly110–Arg113. The Proton acceptor role is filled by Asp112. Residue Asp134 participates in K(+) binding. Residue Thr137 coordinates ATP. Thr190 provides a ligand contact to substrate.

Belongs to the type III pantothenate kinase family. As to quaternary structure, homodimer. The cofactor is NH4(+). It depends on K(+) as a cofactor.

The protein localises to the cytoplasm. The catalysed reaction is (R)-pantothenate + ATP = (R)-4'-phosphopantothenate + ADP + H(+). It functions in the pathway cofactor biosynthesis; coenzyme A biosynthesis; CoA from (R)-pantothenate: step 1/5. Functionally, catalyzes the phosphorylation of pantothenate (Pan), the first step in CoA biosynthesis. This Desulfovibrio desulfuricans (strain ATCC 27774 / DSM 6949 / MB) protein is Type III pantothenate kinase.